A 615-amino-acid polypeptide reads, in one-letter code: uncharacterized protein (615 aa).

This sequence belongs to the NodU/CmcH family.

This is an uncharacterized protein from Synechocystis sp. (strain ATCC 27184 / PCC 6803 / Kazusa).